Reading from the N-terminus, the 528-residue chain is Alpha-amylase (528 aa).

An N-terminal signal peptide occupies residues 1–28 (MNKKWLNIPALIALLAAIAFGSVAPAEA). Ca(2+) is bound by residues Asn-168 and Asp-228. Asp-258 acts as the Nucleophile in catalysis. His-262 serves as a coordination point for Ca(2+). Residue Glu-286 is the Proton donor of the active site.

It belongs to the glycosyl hydrolase 13 family. In terms of assembly, monomer. Requires Ca(2+) as cofactor.

It carries out the reaction Endohydrolysis of (1-&gt;4)-alpha-D-glucosidic linkages in polysaccharides containing three or more (1-&gt;4)-alpha-linked D-glucose units.. The protein is Alpha-amylase of Niallia circulans (Bacillus circulans).